The chain runs to 462 residues: Retinoic acid receptor alpha (462 aa).

The tract at residues 1–87 (MASNSSSCPT…PPPLPRIYKP (87 aa)) is modulating. Positions 52 to 64 (GYSTPSPATIETQ) are enriched in polar residues. The segment at 52–77 (GYSTPSPATIETQSSSSEEIVPSPPS) is disordered. At Ser77 the chain carries Phosphoserine; by CDK7. 2 consecutive NR C4-type zinc fingers follow at residues 88 to 108 (CFVC…CEGC) and 124 to 148 (CHRD…LQKC). The segment at residues 88 to 153 (CFVCQDKSSG…RLQKCFEVGM (66 aa)) is a DNA-binding region (nuclear receptor). Residue Ser96 is modified to Phosphoserine; by PKB/AKT1. The segment at 154 to 182 (SKESVRNDRNKKKKEVPKPECSESYTLTP) is hinge. Residues Lys166 and Lys171 each participate in a glycyl lysine isopeptide (Lys-Gly) (interchain with G-Cter in SUMO) cross-link. The NR LBD domain occupies 183–417 (EVGELIEKVR…PLIQEMLENS (235 aa)). Ser219 carries the phosphoserine; by PKA modification. Position 235 (Cys235) interacts with all-trans-retinoate. A UBR5-degron motif is present at residues 254 to 258 (IADQI). Residue Ser287 participates in all-trans-retinoate binding. The residue at position 369 (Ser369) is a Phosphoserine; by PKA. Lys399 participates in a covalent cross-link: Glycyl lysine isopeptide (Lys-Gly) (interchain with G-Cter in SUMO). The segment at 404–419 (GSMPPLIQEMLENSEG) is required for binding corepressor NCOR1. The short motif at 408 to 416 (PLIQEMLEN) is the 9aaTAD element. Residues 419-462 (GLDTLSGQPGGGGRDGGGLAPPPGSCSPSLSPSSNRSSPATHSP) form a disordered region. Positions 426–437 (QPGGGGRDGGGL) are enriched in gly residues. Residues 444-462 (CSPSLSPSSNRSSPATHSP) show a composition bias toward low complexity.

The protein belongs to the nuclear hormone receptor family. NR1 subfamily. As to quaternary structure, heterodimer; with RXRA (via C-terminus); association with RXRA is enhanced by pulsatile shear stress. Binds DNA preferentially as a heterodimer. RXRA serves as enhancer to induce RARA binding to RARE. Interacts with RXRG. Interacts with coactivators NCOA3 and NCOA6. Interacts with NCOA7; the interaction requires ligand-binding. Interacts (via the ligand-binding domain) with PRAME; the interaction is ligand (retinoic acid)-dependent. Interacts with AKT1; the interaction phosphorylates RARA and represses transactivation. Interacts with PRKAR1A; the interaction negatively regulates RARA transcriptional activity. Interacts with NCOR1 and NCOR2. Interacts with PRMT2. Interacts with LRIF1. Interacts with ASXL1 and NCOA1. Interacts with ACTN4. In a complex with HDAC3, HDAC5 and HDAC7; the HDACs serve as corepressors of RARA, causing its deacetylation and inhibition of RARE DNA element binding; association with HDAC3, HDAC5 and HDAC7 is increased upon oscillatory shear stress. Interacts with CDK7. In the absence of hormonal ligand, interacts with TACC1. Phosphorylated on serine and threonine residues. Phosphorylation does not change during cell cycle. Phosphorylation on Ser-77 is crucial for transcriptional activity. Phosphorylation by AKT1 is required for the repressor activity but has no effect on DNA binding, protein stability nor subcellular localization. Phosphorylated by PKA in vitro. This phosphorylation on Ser-219 and Ser-369 is critical for ligand binding, nuclear localization and transcriptional activity in response to FSH signaling. In terms of processing, sumoylated with SUMO2, mainly on Lys-399 which is also required for SENP6 binding. On all-trans retinoic acid (ATRA) binding, a conformational change may occur that allows sumoylation on two additional site, Lys-166 and Lys-171. Probably desumoylated by SENP6. Sumoylation levels determine nuclear localization and regulate ATRA-mediated transcriptional activity. Post-translationally, trimethylation enhances heterodimerization with RXRA and positively modulates the transcriptional activation. Ubiquitinated by UBR5, leading to its degradation: UBR5 specifically recognizes and binds ligand-bound RARA when it is not associated with coactivators (NCOAs). In presence of NCOAs, the UBR5-degron is not accessible, preventing its ubiquitination and degradation. In terms of processing, acetylated; acetylation is increased upon pulsatile shear stress and decreased upon oscillatory shear stress. As to expression, expressed in monocytes.

It is found in the nucleus. Its subcellular location is the cytoplasm. Its function is as follows. Receptor for retinoic acid. Retinoic acid receptors bind as heterodimers to their target response elements in response to their ligands, all-trans or 9-cis retinoic acid, and regulate gene expression in various biological processes. The RXR/RAR heterodimers bind to the retinoic acid response elements (RARE) composed of tandem 5'-AGGTCA-3' sites known as DR1-DR5. In the absence of ligand, the RXR-RAR heterodimers associate with a multiprotein complex containing transcription corepressors that induce histone deacetylation, chromatin condensation and transcriptional suppression. On ligand binding, the corepressors dissociate from the receptors and associate with the coactivators leading to transcriptional activation. Formation of a complex with histone deacetylases might lead to inhibition of RARE DNA element binding and to transcriptional repression. Transcriptional activation and RARE DNA element binding might be supported by the transcription factor KLF2. RARA plays an essential role in the regulation of retinoic acid-induced germ cell development during spermatogenesis. Has a role in the survival of early spermatocytes at the beginning prophase of meiosis. In Sertoli cells, may promote the survival and development of early meiotic prophase spermatocytes. In concert with RARG, required for skeletal growth, matrix homeostasis and growth plate function. Together with RXRA, positively regulates microRNA-10a expression, thereby inhibiting the GATA6/VCAM1 signaling response to pulsatile shear stress in vascular endothelial cells. In association with HDAC3, HDAC5 and HDAC7 corepressors, plays a role in the repression of microRNA-10a and thereby promotes the inflammatory response. This chain is Retinoic acid receptor alpha (RARA), found in Homo sapiens (Human).